The following is a 745-amino-acid chain: 5-methyltetrahydropteroyltriglutamate--homocysteine methyltransferase (745 aa).

Lys-19 and Asn-115 together coordinate 5-methyltetrahydropteroyltri-L-glutamate. Residues 420 to 422 (IGS) and Glu-473 each bind L-homocysteine. Residues 420-422 (IGS) and Glu-473 each bind L-methionine. 5-methyltetrahydropteroyltri-L-glutamate is bound by residues Asp-478, Tyr-501, 504–505 (RA), and Trp-550. L-homocysteine is bound at residue Asp-588. Residue Asp-588 coordinates L-methionine. The Zn(2+) site is built by His-630, Cys-632, and Glu-654. His-683 acts as the Proton donor in catalysis. Cys-715 serves as a coordination point for Zn(2+).

The protein belongs to the vitamin-B12 independent methionine synthase family. Zn(2+) serves as cofactor.

It catalyses the reaction 5-methyltetrahydropteroyltri-L-glutamate + L-homocysteine = tetrahydropteroyltri-L-glutamate + L-methionine. The protein operates within amino-acid biosynthesis; L-methionine biosynthesis via de novo pathway; L-methionine from L-homocysteine (MetE route): step 1/1. In terms of biological role, catalyzes the transfer of a methyl group from 5-methyltetrahydrofolate to homocysteine resulting in methionine formation. This chain is 5-methyltetrahydropteroyltriglutamate--homocysteine methyltransferase, found in Streptococcus mutans serotype c (strain ATCC 700610 / UA159).